A 594-amino-acid polypeptide reads, in one-letter code: RING finger protein 207 (594 aa).

An RING-type zinc finger spans residues 25 to 64 (CPLCHAQYERPCLLDCFHDFCAGCLRGRTADGRVACPLCQ). The segment at 93-145 (VEAVHCANCDLDCSKQDAETACFCNTCGQPLCARCRDETHRARMFARHDIVAL) adopts a B box-type; atypical zinc-finger fold. Residues C98, C101, C127, and H132 each contribute to the Zn(2+) site. The interval 369-400 (NTLAGGSGPKVLMGPSCPSPVRKVSRSPVQKP) is disordered. Positions 424–458 (CRHYEDSYRGLQAEVQNLKDQVQELHRDLTKHHSL) form a coiled coil. Positions 552-594 (FQASADDESENPQTAYDASRNGETPASLLLPGSVASAEPPFVN) are disordered. Residues 562–575 (NPQTAYDASRNGET) show a composition bias toward polar residues.

In terms of assembly, interacts with the core-glycosylated, but not the fully glycosylated form of KCNH2/HERG. Interacts with DNAJA1 and HSPA8. Interacts (via the C-terminus) with HSPA1A; this interaction additively increases KCNH2 expression.

The protein resides in the cytoplasm. Plays a role in cardiac repolarization possibly by stabilizing membrane expression of the potassium channel KCNH2/HERG, or by assisting its synthesis, folding or export from the endoplasmic reticulum, in a heat shock protein-dependent manner. This Oryctolagus cuniculus (Rabbit) protein is RING finger protein 207 (RNF207).